Consider the following 556-residue polypeptide: Oxygen-dependent choline dehydrogenase (556 aa).

4 to 33 (DYIIIGAGSAGNVLATRLTEDPNTSVLLLE) lines the FAD pocket. The active-site Proton acceptor is the His473.

Belongs to the GMC oxidoreductase family. Requires FAD as cofactor.

It catalyses the reaction choline + A = betaine aldehyde + AH2. The catalysed reaction is betaine aldehyde + NAD(+) + H2O = glycine betaine + NADH + 2 H(+). The protein operates within amine and polyamine biosynthesis; betaine biosynthesis via choline pathway; betaine aldehyde from choline (cytochrome c reductase route): step 1/1. In terms of biological role, involved in the biosynthesis of the osmoprotectant glycine betaine. Catalyzes the oxidation of choline to betaine aldehyde and betaine aldehyde to glycine betaine at the same rate. This Escherichia coli O139:H28 (strain E24377A / ETEC) protein is Oxygen-dependent choline dehydrogenase.